Consider the following 192-residue polypeptide: Crossover junction endodeoxyribonuclease RuvC (192 aa).

Active-site residues include aspartate 8, glutamate 67, and aspartate 139. Aspartate 8, glutamate 67, and aspartate 139 together coordinate Mg(2+).

Belongs to the RuvC family. As to quaternary structure, homodimer which binds Holliday junction (HJ) DNA. The HJ becomes 2-fold symmetrical on binding to RuvC with unstacked arms; it has a different conformation from HJ DNA in complex with RuvA. In the full resolvosome a probable DNA-RuvA(4)-RuvB(12)-RuvC(2) complex forms which resolves the HJ. The cofactor is Mg(2+).

Its subcellular location is the cytoplasm. It catalyses the reaction Endonucleolytic cleavage at a junction such as a reciprocal single-stranded crossover between two homologous DNA duplexes (Holliday junction).. In terms of biological role, the RuvA-RuvB-RuvC complex processes Holliday junction (HJ) DNA during genetic recombination and DNA repair. Endonuclease that resolves HJ intermediates. Cleaves cruciform DNA by making single-stranded nicks across the HJ at symmetrical positions within the homologous arms, yielding a 5'-phosphate and a 3'-hydroxyl group; requires a central core of homology in the junction. The consensus cleavage sequence is 5'-(A/T)TT(C/G)-3'. Cleavage occurs on the 3'-side of the TT dinucleotide at the point of strand exchange. HJ branch migration catalyzed by RuvA-RuvB allows RuvC to scan DNA until it finds its consensus sequence, where it cleaves and resolves the cruciform DNA. The chain is Crossover junction endodeoxyribonuclease RuvC from Haemophilus ducreyi (strain 35000HP / ATCC 700724).